The sequence spans 177 residues: Ubiquinol-cytochrome c reductase iron-sulfur subunit (177 aa).

Residues 18–38 (MVLTASSVAAIGAVCTLWPLV) traverse the membrane as a helical segment. Positions 88 to 175 (ARAVKMSELI…YTFISDKKIR (88 aa)) constitute a Rieske domain. The [2Fe-2S] cluster site is built by C120, H122, C139, and H142. A disulfide bond links C125 and C141.

The protein belongs to the Rieske iron-sulfur protein family. In terms of assembly, the main subunits of complex b-c1 are: cytochrome b, cytochrome c1 and the Rieske protein. [2Fe-2S] cluster serves as cofactor.

It localises to the cell membrane. The enzyme catalyses a quinol + 2 Fe(III)-[cytochrome c](out) = a quinone + 2 Fe(II)-[cytochrome c](out) + 2 H(+)(out). Component of the ubiquinol-cytochrome c reductase complex (complex III or cytochrome b-c1 complex), which is a respiratory chain that generates an electrochemical potential coupled to ATP synthesis. In Rickettsia conorii (strain ATCC VR-613 / Malish 7), this protein is Ubiquinol-cytochrome c reductase iron-sulfur subunit (petA).